Reading from the N-terminus, the 485-residue chain is Ribulose bisphosphate carboxylase large chain (485 aa).

Residues Asn-124 and Thr-174 each contribute to the substrate site. Residue Lys-176 is the Proton acceptor of the active site. Lys-178 is a binding site for substrate. Positions 202, 204, and 205 each coordinate Mg(2+). Position 202 is an N6-carboxylysine (Lys-202). The active-site Proton acceptor is His-294. Positions 295, 327, and 379 each coordinate substrate.

This sequence belongs to the RuBisCO large chain family. Type I subfamily. Heterohexadecamer of 8 large chains and 8 small chains. Mg(2+) serves as cofactor.

The catalysed reaction is 2 (2R)-3-phosphoglycerate + 2 H(+) = D-ribulose 1,5-bisphosphate + CO2 + H2O. It catalyses the reaction D-ribulose 1,5-bisphosphate + O2 = 2-phosphoglycolate + (2R)-3-phosphoglycerate + 2 H(+). RuBisCO catalyzes two reactions: the carboxylation of D-ribulose 1,5-bisphosphate, the primary event in carbon dioxide fixation, as well as the oxidative fragmentation of the pentose substrate. Both reactions occur simultaneously and in competition at the same active site. In Rhodopseudomonas palustris (strain HaA2), this protein is Ribulose bisphosphate carboxylase large chain.